Reading from the N-terminus, the 418-residue chain is eIF5-mimic protein 2 (418 aa).

Over residues 1–14 (MNQKQQKPTLSGQR) the composition is skewed to polar residues. The interval 1–25 (MNQKQQKPTLSGQRFKTRKRDEKER) is disordered. Positions 246–413 (NQQTIGARKE…KNAEEESESE (168 aa)) constitute a W2 domain.

It belongs to the BZW family.

Its function is as follows. Translation initiation regulator which may repress repeat-associated non-AUG (RAN) initiated translation probably by acting as a competitive inhibitor of eukaryotic translation initiation factor 5 (EIF5) function. Enhances histone H4 gene transcription but does not seem to bind DNA directly. The chain is eIF5-mimic protein 2 (BZW1) from Gallus gallus (Chicken).